Consider the following 400-residue polypeptide: Probable peptidoglycan glycosyltransferase FtsW (400 aa).

The Cytoplasmic segment spans residues 1-24; that stretch reads MSTGSLPLGLPSRDSLDGLRNSVD. Residues 25–45 form a helical membrane-spanning segment; the sequence is LPLLAAAALLLGLGLIMVASA. Residues 46–63 are Periplasmic-facing; that stretch reads SMDLGERYYGNTWHFFQR. A helical transmembrane segment spans residues 64–84; it reads QVLFAAIGLALATVMWAIPLE. The Cytoplasmic segment spans residues 85-88; that stretch reads RWER. The helical transmembrane segment at 89 to 109 threads the bilayer; that stretch reads AGPWLLILVMVLLIAVLLPGV. At 110–118 the chain is on the periplasmic side; sequence GRTVNGATR. A helical transmembrane segment spans residues 119 to 139; it reads WIPIGMFNLQVAEPVKLLVVM. Topologically, residues 140-153 are cytoplasmic; the sequence is YLAGYIVRHYSALR. A helical transmembrane segment spans residues 154-174; that stretch reads LHLRGFVRPLVVLGFGTVLLL. The Periplasmic portion of the chain corresponds to 175–177; sequence LQP. Residues 178–198 traverse the membrane as a helical segment; the sequence is DFGGAAIMLAIGMGMLFLAGA. Lys-199 is a topological domain (cytoplasmic). Residues 200-220 form a helical membrane-spanning segment; it reads LWQFAALGATIAVGMAFVAVA. The Periplasmic portion of the chain corresponds to 221–278; it reads APYRVARLTAFLDPWQDPFATGFQLTQSLIAIGSGGWFGTGLGNSVQKLFYLPEAHND. Residues 279–299 form a helical membrane-spanning segment; it reads FLFAVFAEEFGFIGVLALIAL. Over 300-324 the chain is Cytoplasmic; sequence FAVVVWRCVKIGLWAERAGHAFGSH. A helical membrane pass occupies residues 325–345; that stretch reads LAFGVAIWLALQSALNLAVNM. Residues 346–354 lie on the Periplasmic side of the membrane; the sequence is GLLPTKGMT. The chain crosses the membrane as a helical span at residues 355–375; sequence LPFLSYGGSSLIVTLMAIGLV. Over 376–400 the chain is Cytoplasmic; it reads MRVYREAQIPAPRQSTPPRRKRGQA.

The protein belongs to the SEDS family. FtsW subfamily.

Its subcellular location is the cell inner membrane. It catalyses the reaction [GlcNAc-(1-&gt;4)-Mur2Ac(oyl-L-Ala-gamma-D-Glu-L-Lys-D-Ala-D-Ala)](n)-di-trans,octa-cis-undecaprenyl diphosphate + beta-D-GlcNAc-(1-&gt;4)-Mur2Ac(oyl-L-Ala-gamma-D-Glu-L-Lys-D-Ala-D-Ala)-di-trans,octa-cis-undecaprenyl diphosphate = [GlcNAc-(1-&gt;4)-Mur2Ac(oyl-L-Ala-gamma-D-Glu-L-Lys-D-Ala-D-Ala)](n+1)-di-trans,octa-cis-undecaprenyl diphosphate + di-trans,octa-cis-undecaprenyl diphosphate + H(+). Its pathway is cell wall biogenesis; peptidoglycan biosynthesis. In terms of biological role, peptidoglycan polymerase that is essential for cell division. The protein is Probable peptidoglycan glycosyltransferase FtsW of Thioalkalivibrio sp. (strain K90mix).